Reading from the N-terminus, the 457-residue chain is Embryogenesis-associated protein EMB8 (457 aa).

A disordered region spans residues 39–59 (KKPAAGACEEQDELTSGSAAR). One can recognise an AB hydrolase-1 domain in the interval 151 to 391 (PVLILLPGLT…LVVTPNGGHL (241 aa)). Residues Ser-231, Asp-361, and His-390 each act as charge relay system in the active site. The span at 438-447 (VDSVHTRETN) shows a compositional bias: basic and acidic residues. The tract at residues 438-457 (VDSVHTRETNNYKSPIENVN) is disordered. The span at 448–457 (NYKSPIENVN) shows a compositional bias: polar residues.

The protein belongs to the AB hydrolase superfamily. AB hydrolase 4 family.

The sequence is that of Embryogenesis-associated protein EMB8 (EMB8) from Picea glauca (White spruce).